The following is a 164-amino-acid chain: Ribonuclease P protein component 2 (164 aa).

The protein belongs to the eukaryotic/archaeal RNase P protein component 2 family. As to quaternary structure, consists of a catalytic RNA component and at least 4-5 protein subunits.

It is found in the cytoplasm. The enzyme catalyses Endonucleolytic cleavage of RNA, removing 5'-extranucleotides from tRNA precursor.. Functionally, part of ribonuclease P, a protein complex that generates mature tRNA molecules by cleaving their 5'-ends. The polypeptide is Ribonuclease P protein component 2 (Halobacterium salinarum (strain ATCC 29341 / DSM 671 / R1)).